Reading from the N-terminus, the 578-residue chain is Glycosyltransferase family 92 protein RCOM_0530710 (578 aa).

A helical transmembrane segment spans residues 21 to 43 (SFFSVRSLTACLSFFVFLLFISS). A GT92 domain is found at 295 to 531 (YELCACTMLW…QNQGSKDRAP (237 aa)).

The protein belongs to the glycosyltransferase 92 family.

It is found in the membrane. The polypeptide is Glycosyltransferase family 92 protein RCOM_0530710 (Ricinus communis (Castor bean)).